Consider the following 312-residue polypeptide: Gamma-soluble NSF attachment protein (312 aa).

The tract at residues 281–312 is disordered; it reads KKKSPATPQAKPDGAAGMAAEEEEDEYSGGLC. Residue serine 284 is modified to Phosphoserine. Threonine 287 is modified (phosphothreonine). Acidic residues predominate over residues 300-312; sequence AEEEEDEYSGGLC. The residue at position 308 (serine 308) is a Phosphoserine.

Belongs to the SNAP family. In terms of assembly, interacts with RAB11FIP5. Interacts with VTI1A. In terms of tissue distribution, abundantly expressed in the heart, liver and kidneys with lower expression in the brain, spleen, lung, muscle and testes.

The protein localises to the membrane. It is found in the golgi apparatus. Functionally, required for vesicular transport between the endoplasmic reticulum and the Golgi apparatus. The chain is Gamma-soluble NSF attachment protein from Mus musculus (Mouse).